Here is a 684-residue protein sequence, read N- to C-terminus: Divalent metal transporter 1 (684 aa).

The Cytoplasmic segment spans residues 1–228 (MEKDFTERST…YRNKLSLYNK (228 aa)). The interval 153-195 (NKRNNNNNNNNNNNNNNNNNNNNNNNNNNNNNNNNSNNVDNRK) is disordered. Positions 156-191 (NNNNNNNNNNNNNNNNNNNNNNNNNNNNNNNNSNNV) are enriched in low complexity. A helical transmembrane segment spans residues 229-247 (LRMCFNYFGPGWIVAIAYL). The Vacuolar segment spans residues 248–275 (DPGNLCSNLNVGLIRSPDPTLEKDYSGY). The helical transmembrane segment at 276–299 (YLLWIMVYGHMLGFIFQVLSMRLG) threads the bilayer. The Cytoplasmic segment spans residues 300–319 (HVTGLDLASLCSKEFDRTTS). Residues 320 to 345 (TIIYVLVQIAIWGAHIQAIIGTFIAL) form a helical membrane-spanning segment. The Vacuolar segment spans residues 346 to 350 (NLIFG). A helical transmembrane segment spans residues 351–370 (ISVKVAIFYTLFEAIIYSFL). The Cytoplasmic segment spans residues 371–381 (ENKSLGLLENV). A helical transmembrane segment spans residues 382–404 (LSFLVGILAVSFFVNVFMTPINF). At 405 to 423 (KELAISILYPRIPKGKEID) the chain is on the vacuolar side. Residues 424–445 (ALALLGSIISAHIFYLHTNLTA) traverse the membrane as a helical segment. The Cytoplasmic portion of the chain corresponds to 446-465 (KKKSVICNDLSLRRYNTLGT). Residues 466-487 (IESGGSLFLSCLTNCIIVLTFA) form a helical membrane-spanning segment. Topologically, residues 488 to 515 (EVNLKSFERRDQYNLFTAYEVMRKSFGK) are vacuolar. Residues 516-534 (ISMYIWSFGLLSSGNNSSF) form a helical membrane-spanning segment. At 535–554 (MCEYASKSVVEGFLNKKINT) the chain is on the cytoplasmic side. Residues 555 to 573 (FVRVFTFRLMLFSLLYMFL) traverse the membrane as a helical segment. Residues 574 to 584 (TLNKYTLDQLT) lie on the Vacuolar side of the membrane. A helical transmembrane segment spans residues 585-603 (NFINVIQVLLLPMATIPLY). At 604-622 (RFSIHENVLGEFRLKKFPK) the chain is on the cytoplasmic side. A helical membrane pass occupies residues 623–645 (FAVFLIIIAIIISNVLLTFLDFV). The Vacuolar portion of the chain corresponds to 646 to 650 (HKETS). The helical transmembrane segment at 651 to 673 (LITIFFLVIFSFLYFGFIIYFFN) threads the bilayer. The Cytoplasmic portion of the chain corresponds to 674 to 684 (IPIKKNYIQRN).

This sequence belongs to the NRAMP (TC 2.A.55) family.

It localises to the vacuole membrane. It catalyses the reaction Fe(2+)(in) = Fe(2+)(out). Functionally, iron transporter. Required for parasite development during the blood stages. Required for apicoplast biogenesis. Required for mitochondrial polarization. The polypeptide is Divalent metal transporter 1 (Plasmodium falciparum (isolate 3D7)).